The chain runs to 160 residues: Transcriptional repressor NrdR (160 aa).

The segment covering 1 to 11 has biased composition (polar residues); sequence MRCPSCSSLDT. The tract at residues 1–20 is disordered; sequence MRCPSCSSLDTQVKDSRPTE. A zinc finger lies at 3-34; sequence CPSCSSLDTQVKDSRPTEDSSVIRRRRVCLAC. The 91-residue stretch at 49 to 139 folds into the ATP-cone domain; the sequence is LTVIKRNGRR…VYRNFREAKD (91 aa).

Belongs to the NrdR family. The cofactor is Zn(2+).

In terms of biological role, negatively regulates transcription of bacterial ribonucleotide reductase nrd genes and operons by binding to NrdR-boxes. This chain is Transcriptional repressor NrdR, found in Rhodopseudomonas palustris (strain BisA53).